A 170-amino-acid chain; its full sequence is Large ribosomal subunit protein uL10 (170 aa).

The protein belongs to the universal ribosomal protein uL10 family. As to quaternary structure, part of the ribosomal stalk of the 50S ribosomal subunit. The N-terminus interacts with L11 and the large rRNA to form the base of the stalk. The C-terminus forms an elongated spine to which L12 dimers bind in a sequential fashion forming a multimeric L10(L12)X complex.

Its function is as follows. Forms part of the ribosomal stalk, playing a central role in the interaction of the ribosome with GTP-bound translation factors. In Chlamydia felis (strain Fe/C-56) (Chlamydophila felis), this protein is Large ribosomal subunit protein uL10.